Reading from the N-terminus, the 204-residue chain is Outer-membrane lipoprotein LolB (204 aa).

The N-terminal stretch at 1–16 (MLRHLLVFSLIALLAG) is a signal peptide. Cys-17 is lipidated: N-palmitoyl cysteine. Cys-17 carries S-diacylglycerol cysteine lipidation.

Belongs to the LolB family. As to quaternary structure, monomer.

It localises to the cell outer membrane. Functionally, plays a critical role in the incorporation of lipoproteins in the outer membrane after they are released by the LolA protein. The polypeptide is Outer-membrane lipoprotein LolB (Ectopseudomonas mendocina (strain ymp) (Pseudomonas mendocina)).